Consider the following 437-residue polypeptide: Serine hydroxymethyltransferase (437 aa).

(6S)-5,6,7,8-tetrahydrofolate is bound by residues leucine 130 and 134–136 (GHL). Lysine 239 carries the N6-(pyridoxal phosphate)lysine modification.

It belongs to the SHMT family. As to quaternary structure, homodimer. It depends on pyridoxal 5'-phosphate as a cofactor.

The protein localises to the cytoplasm. The catalysed reaction is (6R)-5,10-methylene-5,6,7,8-tetrahydrofolate + glycine + H2O = (6S)-5,6,7,8-tetrahydrofolate + L-serine. It participates in one-carbon metabolism; tetrahydrofolate interconversion. The protein operates within amino-acid biosynthesis; glycine biosynthesis; glycine from L-serine: step 1/1. Catalyzes the reversible interconversion of serine and glycine with tetrahydrofolate (THF) serving as the one-carbon carrier. This reaction serves as the major source of one-carbon groups required for the biosynthesis of purines, thymidylate, methionine, and other important biomolecules. Also exhibits THF-independent aldolase activity toward beta-hydroxyamino acids, producing glycine and aldehydes, via a retro-aldol mechanism. In Bartonella quintana (strain Toulouse) (Rochalimaea quintana), this protein is Serine hydroxymethyltransferase.